Consider the following 1029-residue polypeptide: Cilia- and flagella-associated protein 91 (1029 aa).

2 disordered regions span residues N72–R97 and P117–P170. Residues L272–E299 adopt a coiled-coil conformation. Residues E837–S854 are compositionally biased toward low complexity. 2 disordered regions span residues E837–D861 and G876–E1029. Positions Q890–A910 are enriched in acidic residues. The segment covering E911–E921 has biased composition (low complexity). Positions A922–A932 are enriched in acidic residues. Over residues E933 to A944 the composition is skewed to low complexity. Over residues P964–A982 the composition is skewed to acidic residues. The span at A984–E999 shows a compositional bias: basic and acidic residues. Over residues G1000 to L1015 the composition is skewed to gly residues. Residues A1016–E1029 are compositionally biased toward acidic residues.

This sequence belongs to the CFAP91 family. As to quaternary structure, identified in a spoke-associated complex containing CFAP61, CFAP91 and CFAP251; the complex is associated with the radial spokes of the axoneme. The complex associates with Calmodulin; the association is calcium sensitive. Interacts with RSP3.

It is found in the cytoplasm. It localises to the cytoskeleton. Its subcellular location is the flagellum axoneme. In terms of biological role, as component of a spoke-associated complex, regulates flagellar dynein activity by mediating regulatory signals between the radial spokes and dynein arms. The chain is Cilia- and flagella-associated protein 91 from Chlamydomonas reinhardtii (Chlamydomonas smithii).